The primary structure comprises 215 residues: ATP-dependent dethiobiotin synthetase BioD (215 aa).

13-18 contributes to the ATP binding site; it reads DIGKTV. Thr17 serves as a coordination point for Mg(2+). The active site involves Lys38. Thr42 is a substrate binding site. Residues Asp50, 115–118, and 175–176 each bind ATP; these read EGAG and NH. Residues Asp50 and Glu115 each coordinate Mg(2+).

This sequence belongs to the dethiobiotin synthetase family. In terms of assembly, homodimer. The cofactor is Mg(2+).

The protein localises to the cytoplasm. The catalysed reaction is (7R,8S)-7,8-diammoniononanoate + CO2 + ATP = (4R,5S)-dethiobiotin + ADP + phosphate + 3 H(+). It participates in cofactor biosynthesis; biotin biosynthesis; biotin from 7,8-diaminononanoate: step 1/2. Catalyzes a mechanistically unusual reaction, the ATP-dependent insertion of CO2 between the N7 and N8 nitrogen atoms of 7,8-diaminopelargonic acid (DAPA, also called 7,8-diammoniononanoate) to form a ureido ring. In Neisseria meningitidis serogroup C / serotype 2a (strain ATCC 700532 / DSM 15464 / FAM18), this protein is ATP-dependent dethiobiotin synthetase BioD.